We begin with the raw amino-acid sequence, 79 residues long: CDC42 small effector protein 1 (79 aa).

2 S-palmitoyl cysteine lipidation sites follow: Cys-10 and Cys-11. The CRIB domain maps to 30-43 (IGEPMNFVHLTHIG). The segment at 48–79 (GAGDGLAMTGAVQEQMRSKGNRDRPWSNSRGL) is disordered. A compositionally biased stretch (basic and acidic residues) spans 63–72 (MRSKGNRDRP).

It belongs to the CDC42SE/SPEC family. As to quaternary structure, interacts with CDC42 (in GTP-bound form). Interacts weakly with RAC1 and not at all with RHOA.

It localises to the cytoplasm. The protein resides in the cytoskeleton. It is found in the cell membrane. Functionally, probably involved in the organization of the actin cytoskeleton by acting downstream of CDC42, inducing actin filament assembly. Alters CDC42-induced cell shape changes. In activated T-cells, may play a role in CDC42-mediated F-actin accumulation at the immunological synapse. May play a role in early contractile events in phagocytosis in macrophages. This chain is CDC42 small effector protein 1 (CDC42SE1), found in Bos taurus (Bovine).